The chain runs to 918 residues: Glutamate receptor ionotropic, kainate 1 (918 aa).

Positions 1–30 (MEHGTLLAQPGLWTRDTSWALLYFLCYILP) are cleaved as a signal peptide. The Extracellular segment spans residues 31-576 (QTAPQVLRIG…VFSFLNPLSP (546 aa)). N-linked (GlcNAc...) asparagine glycosylation is found at N68, N74, N276, N379, N428, N439, and N446. Residues P531, T533, and R538 each contribute to the L-glutamate site. N-linked (GlcNAc...) asparagine glycosylation occurs at N561. A helical transmembrane segment spans residues 577–597 (DIWMYVLLACLGVSCVLFVIA). Residues 598–653 (RFTPYEWYNPHPCNPDSDVVENNFTLLNSFWFGVGALMQQGSELMPKALSTRIVGG) lie on the Cytoplasmic side of the membrane. A helical membrane pass occupies residues 654–674 (IWWFFTLIIISSYTANLAAFL). Residues 675 to 834 (TVERMESPID…KEASALGVEN (160 aa)) are Extracellular-facing. The L-glutamate site is built by S704 and T705. Residue S725 is modified to Phosphoserine; by PKC. Position 753 (E753) interacts with L-glutamate. Phosphothreonine; by PKC is present on T761. C765 and C819 are disulfide-bonded. N766 is a glycosylation site (N-linked (GlcNAc...) asparagine). Residues 835 to 855 (IGGIFIVLAAGLVLSVFVAIG) traverse the membrane as a helical segment. At 856 to 918 (EFIYKSRKNN…IRKQSSVHTV (63 aa)) the chain is on the cytoplasmic side.

The protein belongs to the glutamate-gated ion channel (TC 1.A.10.1) family. GRIK1 subfamily. Homotetramer or heterotetramer of pore-forming glutamate receptor subunits. Tetramers may be formed by the dimerization of dimers. Can form functional heteromeric receptors with GRIK5. Can form functional heteromeric receptors with GRIK4. Interacts with KLHL17.

The protein resides in the cell membrane. It is found in the postsynaptic cell membrane. It catalyses the reaction Ca(2+)(in) = Ca(2+)(out). Functionally, ionotropic glutamate receptor that functions as a cation-permeable ligand-gated ion channel, gated by L-glutamate and the glutamatergic agonist kainic acid. L-glutamate acts as an excitatory neurotransmitter at many synapses in the central nervous system. Binding of the excitatory neurotransmitter L-glutamate induces a conformation change, leading to the opening of the cation channel, and thereby converts the chemical signal to an electrical impulse. The receptor then desensitizes rapidly and enters a transient inactive state, characterized by the presence of bound agonist. Ionotropic glutamate receptor that functions as a cation-permeable ligand-gated ion channel, gated by L-glutamate and the glutamatergic agonist kainic acid. This chain is Glutamate receptor ionotropic, kainate 1 (GRIK1), found in Homo sapiens (Human).